A 452-amino-acid chain; its full sequence is Mitochondrial import inner membrane translocase subunit TIM50 (452 aa).

Residues 1–23 (MSLSKLTQTCFSRHQAKTFIRLY) constitute a mitochondrion transit peptide. The Mitochondrial matrix portion of the chain corresponds to 24–167 (SSDFKSLLGP…RRKRMERNTR (144 aa)). Disordered stretches follow at residues 96 to 115 (IEAE…TSSA) and 130 to 153 (ESAA…GNAE). Low complexity predominate over residues 131–144 (SAASKSSSSSGGSS). Residues 168–188 (IGAYVLFGGSIIGFISFCFYY) form a helical membrane-spanning segment. Over 189–452 (GRAQRDEFGN…LFGSRRHVNA (264 aa)) the chain is Mitochondrial intermembrane. An FCP1 homology domain is found at 243–387 (YLQPKYTIVI…VDLAELLKTI (145 aa)).

This sequence belongs to the TIM50 family.

It localises to the mitochondrion inner membrane. Functionally, essential component of the TIM23 complex, a complex that mediates the translocation of transit peptide-containing proteins across the mitochondrial inner membrane. The protein is Mitochondrial import inner membrane translocase subunit TIM50 (scpl-4) of Caenorhabditis elegans.